The primary structure comprises 233 residues: 2-C-methyl-D-erythritol 4-phosphate cytidylyltransferase (233 aa).

This sequence belongs to the IspD/TarI cytidylyltransferase family. IspD subfamily.

It catalyses the reaction 2-C-methyl-D-erythritol 4-phosphate + CTP + H(+) = 4-CDP-2-C-methyl-D-erythritol + diphosphate. Its pathway is isoprenoid biosynthesis; isopentenyl diphosphate biosynthesis via DXP pathway; isopentenyl diphosphate from 1-deoxy-D-xylulose 5-phosphate: step 2/6. Functionally, catalyzes the formation of 4-diphosphocytidyl-2-C-methyl-D-erythritol from CTP and 2-C-methyl-D-erythritol 4-phosphate (MEP). The sequence is that of 2-C-methyl-D-erythritol 4-phosphate cytidylyltransferase from Vibrio atlanticus (strain LGP32) (Vibrio splendidus (strain Mel32)).